The primary structure comprises 894 residues: Glutamate receptor 3 (894 aa).

The N-terminal stretch at 1 to 28 (MARQKKMGQSVLRAVFFLVLGLLGHSHG) is a signal peptide. Topologically, residues 29 to 552 (GFPNTISIGG…GVFSFLDPLA (524 aa)) are extracellular. N-linked (GlcNAc...) asparagine glycans are attached at residues N63, N266, N380, N415, and N422. A disulfide bridge connects residues C91 and C340. Residues P508, T510, and R515 each contribute to the L-glutamate site. The helical transmembrane segment at 553–573 (YEIWMCIVFAYIGVSVVLFLV) threads the bilayer. Topologically, residues 574 to 602 (SRFSPYEWHLEDNNEEPRDPQSPPDPPNE) are cytoplasmic. Residues 603–618 (FGIFNSLWFSLGAFMQ) constitute an intramembrane region (helical; Pore-forming). Residues 619–621 (QGC) lie within the membrane without spanning it. C621 carries S-palmitoyl cysteine lipidation. Topologically, residues 622–627 (DISPRS) are cytoplasmic. Residues 628–648 (LSGRIVGGVWWFFTLIIISSY) form a helical membrane-spanning segment. The Extracellular portion of the chain corresponds to 649–823 (TANLAAFLTV…DKTSALSLSN (175 aa)). L-glutamate contacts are provided by S686, T687, and E737. A disulfide bridge connects residues C750 and C805. A helical transmembrane segment spans residues 824–844 (VAGVFYILVGGLGLAMMVALI). Residues 845-894 (EFCYKSRAESKRMKLTKNTQNFKPAPATNTQNYATYREGYNVYGTESVKI) are Cytoplasmic-facing. C847 is lipidated: S-palmitoyl cysteine. Y877 and Y887 each carry phosphotyrosine.

It belongs to the glutamate-gated ion channel (TC 1.A.10.1) family. GRIA3 subfamily. Homotetramer or heterotetramer of pore-forming glutamate receptor subunits. Tetramers may be formed by the dimerization of dimers. Interacts with PICK1, GRIP1 and GRIP2. Found in a complex with GRIA1, GRIA2, GRIA4, CNIH2, CNIH3, CACNG2, CACNG3, CACNG4, CACNG5, CACNG7 and CACNG8. Interacts with CACNG5. Found in a complex with GRIA1, GRIA2, GRIA4, DLG4, CACNG8 and CNIH2.

The protein resides in the cell membrane. It localises to the postsynaptic cell membrane. The protein localises to the postsynaptic density membrane. It carries out the reaction Ca(2+)(in) = Ca(2+)(out). Its function is as follows. Ionotropic glutamate receptor that functions as a ligand-gated cation channel, gated by L-glutamate and glutamatergic agonists such as alpha-amino-3-hydroxy-5-methyl-4-isoxazolepropionic acid (AMPA), quisqualic acid, and kainic acid. L-glutamate acts as an excitatory neurotransmitter at many synapses in the central nervous system and plays an important role in fast excitatory synaptic transmission by inducing long-term potentiation. Binding of the excitatory neurotransmitter L-glutamate induces a conformation change, leading to the opening of the cation channel, and thereby converts the chemical signal to an electrical impulse upon entry of calcium. The receptor then desensitizes rapidly and enters a transient inactive state, characterized by the presence of bound agonist. In the presence of CACNG8, shows resensitization which is characterized by a delayed accumulation of current flux upon continued application of glutamate. The polypeptide is Glutamate receptor 3 (Homo sapiens (Human)).